Reading from the N-terminus, the 68-residue chain is Neuronal regeneration-related protein (68 aa).

A disordered region spans residues 21–54; that stretch reads MEGRLPKGRLPVPKEVNRKKNDETNAASLTPLGS. Residues 44 to 54 show a composition bias toward polar residues; it reads TNAASLTPLGS.

As to quaternary structure, interacts with the latency-associated peptides (LAP) of TGFB1 and TGFB2; the interaction results in a decrease in TGFB autoinduction. Interacts with FLNA. In terms of processing, phosphorylated on Ser-59. Phosphorylation decreases stability and activity.

It localises to the cytoplasm. May have roles in neural function and cellular differentiation. Ectopic expression promotes axonal regeneration, induces differentiation of fibroblast into myofibroblast, induces myofibroblast ameboid migration, augments motility of gliomas, and increases retinoic-acid regulation of lipid-droplet biogenesis. Down-regulates the expression of TGFB1 and TGFB2 but not of TGFB3. May play a role in the regulation of alveolar generation. The sequence is that of Neuronal regeneration-related protein (NREP) from Macaca fascicularis (Crab-eating macaque).